A 654-amino-acid chain; its full sequence is DNA ligase (654 aa).

Residues 31–35, 80–81, and E109 contribute to the NAD(+) site; these read DSEYD and SL. The active-site N6-AMP-lysine intermediate is K111. 4 residues coordinate NAD(+): R132, E166, K280, and K304. Residues C398, C401, C416, and C421 each contribute to the Zn(2+) site. Residues 579 to 654 form the BRCT domain; it reads NIEGILSGKT…IWSEQDLLDL (76 aa).

It belongs to the NAD-dependent DNA ligase family. LigA subfamily. The cofactor is Mg(2+). Mn(2+) serves as cofactor.

The enzyme catalyses NAD(+) + (deoxyribonucleotide)n-3'-hydroxyl + 5'-phospho-(deoxyribonucleotide)m = (deoxyribonucleotide)n+m + AMP + beta-nicotinamide D-nucleotide.. Functionally, DNA ligase that catalyzes the formation of phosphodiester linkages between 5'-phosphoryl and 3'-hydroxyl groups in double-stranded DNA using NAD as a coenzyme and as the energy source for the reaction. It is essential for DNA replication and repair of damaged DNA. The polypeptide is DNA ligase (Lactococcus lactis subsp. lactis (strain IL1403) (Streptococcus lactis)).